The following is a 496-amino-acid chain: Ankyrin repeat domain-containing protein 34A (496 aa).

4 ANK repeats span residues 4-33 (TEGHALLRAVGQGKLRLARLLLEGGAYVNE), 37-72 (QGETALMAACRARYDDPQNKARMVRYLLEQGADPNI), 76-106 (LGRTALMHACAGGGGAAVASLLLAHGADPSV), and 110-139 (AGASALVHALDRGDRETLATLLDACKAKGT). An N5-methylglutamine modification is found at glutamine 15. Polar residues-rich tracts occupy residues 147–162 (DTSPSGTKKTRQYLNS) and 180–191 (FCTSPSEIQLQT). Residues 147–473 (DTSPSGTKKT…TKRKLVRRHS (327 aa)) form a disordered region. Positions 204–214 (AQEEEEKRDVF) are enriched in basic and acidic residues. The segment covering 218-233 (LPKPPDDPSPSEPLPK) has biased composition (pro residues). Basic residues predominate over residues 234–243 (PPRHPPKPLK). A Phosphothreonine modification is found at threonine 316. Basic residues predominate over residues 463-473 (RTKRKLVRRHS).

It belongs to the ANKRD34 family. In terms of processing, methylated at Gln-15 by N6AMT1.

This is Ankyrin repeat domain-containing protein 34A (ANKRD34A) from Homo sapiens (Human).